The sequence spans 279 residues: Urease accessory protein UreD (279 aa).

The protein belongs to the UreD family. UreD, UreF and UreG form a complex that acts as a GTP-hydrolysis-dependent molecular chaperone, activating the urease apoprotein by helping to assemble the nickel containing metallocenter of UreC. The UreE protein probably delivers the nickel.

It is found in the cytoplasm. Functionally, required for maturation of urease via the functional incorporation of the urease nickel metallocenter. The polypeptide is Urease accessory protein UreD (Streptococcus salivarius (strain 57.I)).